The primary structure comprises 81 residues: Photosystem I iron-sulfur center (81 aa).

4Fe-4S ferredoxin-type domains lie at 2 to 31 (SHSV…MIPW) and 39 to 68 (IASA…VRVY). [4Fe-4S] cluster-binding residues include Cys-11, Cys-14, Cys-17, Cys-21, Cys-48, Cys-51, Cys-54, and Cys-58.

As to quaternary structure, the eukaryotic PSI reaction center is composed of at least 11 subunits. It depends on [4Fe-4S] cluster as a cofactor.

Its subcellular location is the plastid. It localises to the chloroplast thylakoid membrane. It catalyses the reaction reduced [plastocyanin] + hnu + oxidized [2Fe-2S]-[ferredoxin] = oxidized [plastocyanin] + reduced [2Fe-2S]-[ferredoxin]. Apoprotein for the two 4Fe-4S centers FA and FB of photosystem I (PSI); essential for photochemical activity. FB is the terminal electron acceptor of PSI, donating electrons to ferredoxin. The C-terminus interacts with PsaA/B/D and helps assemble the protein into the PSI complex. Required for binding of PsaD and PsaE to PSI. PSI is a plastocyanin-ferredoxin oxidoreductase, converting photonic excitation into a charge separation, which transfers an electron from the donor P700 chlorophyll pair to the spectroscopically characterized acceptors A0, A1, FX, FA and FB in turn. The polypeptide is Photosystem I iron-sulfur center (Phalaenopsis aphrodite subsp. formosana (Moth orchid)).